Reading from the N-terminus, the 148-residue chain is Cystatin-C (148 aa).

The N-terminal stretch at Met1–Ala30 is a signal peptide. Gln31 is subject to Pyrrolidone carboxylic acid. The Secondary area of contact motif lies at Gln84–Gly88. Cystine bridges form between Cys102-Cys112 and Cys126-Cys146.

The protein localises to the secreted. Functionally, this is a thiol proteinase inhibitor. The polypeptide is Cystatin-C (CST3) (Bos taurus (Bovine)).